The primary structure comprises 155 residues: Small ribosomal subunit protein uS7 (155 aa).

The protein belongs to the universal ribosomal protein uS7 family. Part of the 30S ribosomal subunit. Contacts proteins S9 and S11.

One of the primary rRNA binding proteins, it binds directly to 16S rRNA where it nucleates assembly of the head domain of the 30S subunit. Is located at the subunit interface close to the decoding center, probably blocks exit of the E-site tRNA. In Helicobacter pylori (strain Shi470), this protein is Small ribosomal subunit protein uS7.